A 276-amino-acid polypeptide reads, in one-letter code: Carbonic anhydrase Nec1 (276 aa).

Residues 1-27 (MKMINSIFTHGSLIILLLLFHSISIKA) form the signal peptide. Residues 34 to 270 (REFDYLEGSE…LNHREVQLHC (237 aa)) form the Alpha-carbonic anhydrase domain. A disulfide bond links cysteine 59 and cysteine 220. The active-site Proton acceptor is histidine 98. Zn(2+)-binding residues include histidine 124 and histidine 126. N-linked (GlcNAc...) asparagine glycosylation occurs at asparagine 134. Histidine 143 contributes to the Zn(2+) binding site. Positions 216 to 217 (TT) are substrate binding.

Belongs to the alpha-class carbonic anhydrase family. In terms of assembly, homodimer. Zn(2+) serves as cofactor. Confined to nectaries.

The catalysed reaction is hydrogencarbonate + H(+) = CO2 + H2O. The protein operates within one-carbon metabolism. Involved in the production of blood-red nectar containing the alkaloid nesocodin and that serves as a visual attractant for pollinator visitation, including vertebrates such as Phelsuma geckos. The nectar is initially acidic and pale yellow, but slowly becomes alkaline before turning into red within 24 hours. Together with NEC2 and NEC3, facilitates the condensation of sinapaldehyde ((E)-3,5-dimethoxy-4-hydroxycinnamaldehyde) and proline to form nesocodin, a pigment with a stable imine bond. Mediates the alkalinization (pH increase) of the flower nectar by catalyzing the reversible hydration of carbon dioxide. This is Carbonic anhydrase Nec1 from Nesocodon mauritianus (Blue Mauritius bellflower).